The sequence spans 61 residues: Protein translocase subunit SecE (61 aa).

Residues 38–58 (GIGMILIGTIGMIIRIIGYLV) traverse the membrane as a helical segment.

It belongs to the SecE/SEC61-gamma family. In terms of assembly, component of the Sec protein translocase complex. Heterotrimer consisting of SecY (alpha), SecG (beta) and SecE (gamma) subunits. The heterotrimers can form oligomers, although 1 heterotrimer is thought to be able to translocate proteins. Interacts with the ribosome. May interact with SecDF, and other proteins may be involved.

It is found in the cell membrane. Essential subunit of the Sec protein translocation channel SecYEG. Clamps together the 2 halves of SecY. May contact the channel plug during translocation. The sequence is that of Protein translocase subunit SecE from Thermococcus kodakarensis (strain ATCC BAA-918 / JCM 12380 / KOD1) (Pyrococcus kodakaraensis (strain KOD1)).